Reading from the N-terminus, the 266-residue chain is Small ribosomal subunit protein eS1 (266 aa).

Residues 236–266 (GAGTAAKATGDDTGAKVERADGYEPPIQESV) are disordered. Positions 244–257 (TGDDTGAKVERADG) are enriched in basic and acidic residues.

The protein belongs to the eukaryotic ribosomal protein eS1 family. As to quaternary structure, component of the small ribosomal subunit. Mature ribosomes consist of a small (40S) and a large (60S) subunit. The 40S subunit contains about 33 different proteins and 1 molecule of RNA (18S). The 60S subunit contains about 49 different proteins and 3 molecules of RNA (28S, 5.8S and 5S). Part of the small subunit (SSU) processome, composed of more than 70 proteins and the RNA chaperone small nucleolar RNA (snoRNA) U3.

Its subcellular location is the cytoplasm. The protein resides in the nucleus. The protein localises to the nucleolus. Its function is as follows. Component of the small ribosomal subunit. The ribosome is a large ribonucleoprotein complex responsible for the synthesis of proteins in the cell. Part of the small subunit (SSU) processome, first precursor of the small eukaryotic ribosomal subunit. During the assembly of the SSU processome in the nucleolus, many ribosome biogenesis factors, an RNA chaperone and ribosomal proteins associate with the nascent pre-rRNA and work in concert to generate RNA folding, modifications, rearrangements and cleavage as well as targeted degradation of pre-ribosomal RNA by the RNA exosome. May play a role during erythropoiesis. This Tetraodon nigroviridis (Spotted green pufferfish) protein is Small ribosomal subunit protein eS1 (rps3a).